Here is a 277-residue protein sequence, read N- to C-terminus: Small ribosomal subunit protein uS2 (277 aa).

Positions 1–78 (MSENDEGTDA…PADEEPVLDE (78 aa)) are disordered.

This sequence belongs to the universal ribosomal protein uS2 family.

The polypeptide is Small ribosomal subunit protein uS2 (Natronomonas pharaonis (strain ATCC 35678 / DSM 2160 / CIP 103997 / JCM 8858 / NBRC 14720 / NCIMB 2260 / Gabara) (Halobacterium pharaonis)).